Here is a 409-residue protein sequence, read N- to C-terminus: TNF receptor-associated factor family protein DDB_G0273435/DDB_G0273505 (409 aa).

The segment at 20-59 (CQLCCNLMNESVSCPNGHCLCKGCFHKQIETVKSECPICC) adopts an RING-type; degenerate zinc-finger fold. TRAF-type zinc fingers lie at residues 75–145 (KHIN…EIEN) and 145–201 (NHQD…HELS). Positions 221-250 (HQSLLKSTSKQLKQLRSSCEELETKLINND) form a coiled coil. An MATH domain is found at 252 to 380 (SFNGRWIIKQ…NDQLIIKFNI (129 aa)).

Belongs to the TNF receptor-associated factor family. A subfamily.

The protein localises to the cytoplasm. Its function is as follows. Probable adapter protein and signal transducer that links members of the tumor necrosis factor receptor family to different signaling pathways by association with the receptor cytoplasmic domain and kinases. The protein is TNF receptor-associated factor family protein DDB_G0273435/DDB_G0273505 of Dictyostelium discoideum (Social amoeba).